A 338-amino-acid chain; its full sequence is uncharacterized protein (338 aa).

This is an uncharacterized protein from Bacillus subtilis (strain 168).